A 407-amino-acid chain; its full sequence is Putative aspartate aminotransferase, cytoplasmic 2 (407 aa).

Lys-249 bears the N6-(pyridoxal phosphate)lysine mark.

Belongs to the class-I pyridoxal-phosphate-dependent aminotransferase family. Homodimer. The cofactor is pyridoxal 5'-phosphate.

The protein localises to the cytoplasm. It carries out the reaction L-aspartate + 2-oxoglutarate = oxaloacetate + L-glutamate. The polypeptide is Putative aspartate aminotransferase, cytoplasmic 2 (GOT1L1) (Bos taurus (Bovine)).